The primary structure comprises 332 residues: 6-phosphogluconolactonase (332 aa).

This sequence belongs to the cycloisomerase 2 family.

The enzyme catalyses 6-phospho-D-glucono-1,5-lactone + H2O = 6-phospho-D-gluconate + H(+). The protein operates within carbohydrate degradation; pentose phosphate pathway; D-ribulose 5-phosphate from D-glucose 6-phosphate (oxidative stage): step 2/3. Functionally, catalyzes the hydrolysis of 6-phosphogluconolactone to 6-phosphogluconate. This chain is 6-phosphogluconolactonase, found in Pectobacterium atrosepticum (strain SCRI 1043 / ATCC BAA-672) (Erwinia carotovora subsp. atroseptica).